A 404-amino-acid chain; its full sequence is F-box protein At3g57590 (404 aa).

An F-box domain is found at 1–47; that stretch reads MEPIPNDLILEIFSRLPAKSVIGFRTLSKHWASILRSPVFTELFLTR.

The protein is F-box protein At3g57590 of Arabidopsis thaliana (Mouse-ear cress).